A 134-amino-acid polypeptide reads, in one-letter code: Methylglyoxal synthase (134 aa).

One can recognise an MGS-like domain in the interval Met1 to Asn134. Residues His8, Lys12, Thr34–Thr37, and Ser54–Gly55 contribute to the substrate site. Catalysis depends on Asp60, which acts as the Proton donor/acceptor. His87 is a binding site for substrate.

Belongs to the methylglyoxal synthase family.

The enzyme catalyses dihydroxyacetone phosphate = methylglyoxal + phosphate. Functionally, catalyzes the formation of methylglyoxal from dihydroxyacetone phosphate. The polypeptide is Methylglyoxal synthase (Lysinibacillus sphaericus (strain C3-41)).